The sequence spans 493 residues: Argininosuccinate lyase (493 aa).

Belongs to the lyase 1 family. Argininosuccinate lyase subfamily.

It is found in the cytoplasm. The enzyme catalyses 2-(N(omega)-L-arginino)succinate = fumarate + L-arginine. It participates in amino-acid biosynthesis; L-arginine biosynthesis; L-arginine from L-ornithine and carbamoyl phosphate: step 3/3. The polypeptide is Argininosuccinate lyase (Methanospirillum hungatei JF-1 (strain ATCC 27890 / DSM 864 / NBRC 100397 / JF-1)).